A 560-amino-acid chain; its full sequence is Membrane protein insertase YidC (560 aa).

A helical membrane pass occupies residues 1-21 (MDIKRTILIAALAVVSYVMVL). Positions 42–66 (VAPGLPDGVPAGNNGASADVPSANA) are disordered. Helical transmembrane passes span 341–361 (LELTVDYGFLWFIAQPIFWLL), 367–387 (LLGNWGWSIIVLTMLIKGLFF), 437–457 (LGGCLPILVQMPVFLALYWVL), 468–488 (WILWITDLSIKDPFFILPIIM), and 515–535 (PIIFTFFFLWFPAGLVLYWVV).

This sequence belongs to the OXA1/ALB3/YidC family. Type 1 subfamily. As to quaternary structure, interacts with the Sec translocase complex via SecD. Specifically interacts with transmembrane segments of nascent integral membrane proteins during membrane integration.

It is found in the cell inner membrane. Required for the insertion and/or proper folding and/or complex formation of integral membrane proteins into the membrane. Involved in integration of membrane proteins that insert both dependently and independently of the Sec translocase complex, as well as at least some lipoproteins. Aids folding of multispanning membrane proteins. The polypeptide is Membrane protein insertase YidC (Pseudomonas putida (strain ATCC 700007 / DSM 6899 / JCM 31910 / BCRC 17059 / LMG 24140 / F1)).